Reading from the N-terminus, the 468-residue chain is MLPKKKLHMKVGILDSTLREGEQTPGVVFTTDQRVEIAKALSDIGVQMIEAGHPAVSPDIYEGIRRIIKLKREGVIKSEIVAHSRAVKRDIEVGAEIEADRIAIFYGISDTHLKAKHHTTRDEALRSIAETVSYAKSHGVKVRFTAEDATRADYQYLLEVIKTVRDAGADRVSIADTVGVLYPSRTRELFKDLTSRFPDIEFDIHAHNDLGMAVANVLAAAEGGATIIHTTLNGLGERVGIAPLQVVAAALKYHFGIEVVDLKKLSEVASLVEKYSGIALPPNFPITGDYAFVHKAGVHVAGVLNDPKTYEFLPPETFGRSRDYVIDKYTGKHAVKDRFDRLGVKLTDSEIDQVLAKIKSNPNVRFYRDVDLLELAESVTGRILKPRPPENIMALISVKCDSNVYTTSVTRRIVLIEGVREVMEISGDYDILVKVEAKDSTELNQIIESIRAVKGVKSTLTSLILKKM.

The region spanning 11–266 (VGILDSTLRE…IEVVDLKKLS (256 aa)) is the Pyruvate carboxyltransferase domain. A 2-oxoglutarate-binding site is contributed by R19. Mg(2+) is bound at residue E20. 3 residues coordinate 2-oxoglutarate: H83, R143, and T177. 2 residues coordinate Mg(2+): H205 and H207. H299 functions as the Proton acceptor in the catalytic mechanism.

It belongs to the alpha-IPM synthase/homocitrate synthase family. Homocitrate synthase LYS20/LYS21 subfamily. Mg(2+) is required as a cofactor. Mn(2+) serves as cofactor.

It carries out the reaction acetyl-CoA + 2-oxoglutarate + H2O = (2R)-homocitrate + CoA + H(+). It participates in amino-acid biosynthesis; L-lysine biosynthesis via AAA pathway; L-alpha-aminoadipate from 2-oxoglutarate: step 1/5. With respect to regulation, inhibited by lysine. Functionally, catalyzes the aldol-type condensation of 2-oxoglutarate with acetyl-CoA to yield homocitrate. Carries out the first step of the alpha-aminoadipate (AAA) lysine biosynthesis pathway. Does not display 2-isopropylmalate synthase and citramalate synthase activities since it cannot use 2-oxoisovalerate or pyruvate as substrate. This chain is Homocitrate synthase, found in Sulfolobus acidocaldarius (strain ATCC 33909 / DSM 639 / JCM 8929 / NBRC 15157 / NCIMB 11770).